We begin with the raw amino-acid sequence, 393 residues long: MTVIGTPLSPVRTRIMLLGSGELGKEVAIEAMRLGAEVVAVDRYAGAPAMQVAHRSHVISMLDADALRRLIAEERPDFVVPEIEAIATDVLEELESDSLTVVPTARAARLTMNREGIRRLAAEELGLRTSPYRFAQTEDEYRRAVEELGMPCVVKPVMSSSGKGQSVVRSADDIADAWTYAQSGGRAGGGRVIVESFVDFDYEITLLTVRHCNGTSFCEPIGHRQEDGDYRQSWQPQPMSAAALEQARHMAQAVTQALGGYGLFGVELFIKGDTVWFSEVSPRPHDTGLVTIASQNLSEFALHVRAVLGLPVPVIRQYGPAASSVILAEGSSARTRFGNLQEALGEPDTSLLLFGKPEVQGRRRMGVALALGETVEQAVEKACRVSDAVKVML.

N(1)-(5-phospho-beta-D-ribosyl)glycinamide is bound by residues 22–23 and Glu-82; that span reads EL. ATP-binding positions include Arg-114, Lys-155, 160 to 165, 195 to 198, and Glu-203; these read SSGKGQ and ESFV. The 190-residue stretch at 119–308 folds into the ATP-grasp domain; it reads RLAAEELGLR…EFALHVRAVL (190 aa). Residues Glu-267 and Glu-279 each contribute to the Mg(2+) site. Residues Asp-286, Lys-356, and 363-364 contribute to the N(1)-(5-phospho-beta-D-ribosyl)glycinamide site; that span reads RR.

This sequence belongs to the PurK/PurT family. Homodimer.

It carries out the reaction N(1)-(5-phospho-beta-D-ribosyl)glycinamide + formate + ATP = N(2)-formyl-N(1)-(5-phospho-beta-D-ribosyl)glycinamide + ADP + phosphate + H(+). It participates in purine metabolism; IMP biosynthesis via de novo pathway; N(2)-formyl-N(1)-(5-phospho-D-ribosyl)glycinamide from N(1)-(5-phospho-D-ribosyl)glycinamide (formate route): step 1/1. Involved in the de novo purine biosynthesis. Catalyzes the transfer of formate to 5-phospho-ribosyl-glycinamide (GAR), producing 5-phospho-ribosyl-N-formylglycinamide (FGAR). Formate is provided by PurU via hydrolysis of 10-formyl-tetrahydrofolate. The protein is Formate-dependent phosphoribosylglycinamide formyltransferase of Oleidesulfovibrio alaskensis (strain ATCC BAA-1058 / DSM 17464 / G20) (Desulfovibrio alaskensis).